The primary structure comprises 218 residues: Elongation factor Ts (218 aa).

Residues 82–85 (TDFV) form an involved in Mg(2+) ion dislocation from EF-Tu region.

Belongs to the EF-Ts family.

The protein localises to the cytoplasm. Associates with the EF-Tu.GDP complex and induces the exchange of GDP to GTP. It remains bound to the aminoacyl-tRNA.EF-Tu.GTP complex up to the GTP hydrolysis stage on the ribosome. The protein is Elongation factor Ts of Prochlorococcus marinus (strain AS9601).